Reading from the N-terminus, the 253-residue chain is Triosephosphate isomerase (253 aa).

9–11 (NWK) contacts substrate. His95 serves as the catalytic Electrophile. Glu167 acts as the Proton acceptor in catalysis. Substrate is bound by residues Gly173, Ser213, and 234 to 235 (GG). Ser213 carries the post-translational modification Phosphoserine.

The protein belongs to the triosephosphate isomerase family. Homodimer.

It is found in the cytoplasm. It carries out the reaction D-glyceraldehyde 3-phosphate = dihydroxyacetone phosphate. It participates in carbohydrate biosynthesis; gluconeogenesis. It functions in the pathway carbohydrate degradation; glycolysis; D-glyceraldehyde 3-phosphate from glycerone phosphate: step 1/1. Functionally, involved in the gluconeogenesis. Catalyzes stereospecifically the conversion of dihydroxyacetone phosphate (DHAP) to D-glyceraldehyde-3-phosphate (G3P). The polypeptide is Triosephosphate isomerase (Lysinibacillus sphaericus (strain C3-41)).